The sequence spans 154 residues: Holo-[acyl-carrier-protein] synthase (154 aa).

Residues aspartate 8 and glutamate 57 each contribute to the Mg(2+) site.

It belongs to the P-Pant transferase superfamily. AcpS family. Requires Mg(2+) as cofactor.

The protein resides in the cytoplasm. The catalysed reaction is apo-[ACP] + CoA = holo-[ACP] + adenosine 3',5'-bisphosphate + H(+). Its function is as follows. Transfers the 4'-phosphopantetheine moiety from coenzyme A to a Ser of acyl-carrier-protein. In Nitrosococcus oceani (strain ATCC 19707 / BCRC 17464 / JCM 30415 / NCIMB 11848 / C-107), this protein is Holo-[acyl-carrier-protein] synthase.